Reading from the N-terminus, the 466-residue chain is Ribulose bisphosphate carboxylase large chain (466 aa).

Residue Lys5 is modified to N6,N6,N6-trimethyllysine. The substrate site is built by Asn114 and Thr164. Lys166 serves as the catalytic Proton acceptor. Lys168 lines the substrate pocket. Mg(2+) contacts are provided by Lys192, Asp194, and Glu195. Position 192 is an N6-carboxylysine (Lys192). His285 functions as the Proton acceptor in the catalytic mechanism. The substrate site is built by Arg286, His318, and Ser370.

Belongs to the RuBisCO large chain family. Type I subfamily. Heterohexadecamer of 8 large chains and 8 small chains; disulfide-linked. The disulfide link is formed within the large subunit homodimers. The cofactor is Mg(2+). The disulfide bond which can form in the large chain dimeric partners within the hexadecamer appears to be associated with oxidative stress and protein turnover.

Its subcellular location is the plastid. The protein localises to the chloroplast. The catalysed reaction is 2 (2R)-3-phosphoglycerate + 2 H(+) = D-ribulose 1,5-bisphosphate + CO2 + H2O. The enzyme catalyses D-ribulose 1,5-bisphosphate + O2 = 2-phosphoglycolate + (2R)-3-phosphoglycerate + 2 H(+). In terms of biological role, ruBisCO catalyzes two reactions: the carboxylation of D-ribulose 1,5-bisphosphate, the primary event in carbon dioxide fixation, as well as the oxidative fragmentation of the pentose substrate in the photorespiration process. Both reactions occur simultaneously and in competition at the same active site. This is Ribulose bisphosphate carboxylase large chain from Adoxa moschatellina (Moschatel).